Consider the following 218-residue polypeptide: Trichothecene biosynthesis transcription regulator TRI6 (218 aa).

Residues 154-181 form a disordered region; sequence SQSTNDPGDAGKKGFATRKDRARHEAKH. Residues 162–176 are compositionally biased toward basic and acidic residues; sequence DAGKKGFATRKDRAR. A C2H2-type zinc finger spans residues 185 to 215; the sequence is IRCQWRDNNGDQCTRTFSRMDNMRDHFRRIH.

It is found in the nucleus. Transcriptional activator of part of the trichothecene biosynthesis cluster that mediates the production of the antimicrobial trichothecene harzianum A (HA) that plays a role in Botrytis cinerea antagonistic activity and plant defense priming. Regulates expression of both trichothecene and mevalonate pathway genes. This chain is Trichothecene biosynthesis transcription regulator TRI6, found in Trichoderma arundinaceum.